The chain runs to 1985 residues: Histone-lysine N-methyltransferase SETD1B (1985 aa).

Over residues 1-11 (MENSHPHHHHQ) the composition is skewed to basic residues. The disordered stretch occupies residues 1–25 (MENSHPHHHHQQPPPQPGPSGERRN). The tract at residues 67-97 (VEDPRVVGIWTKNKELELSVPKFKIDEFYVG) is interaction with WDR82. The region spanning 92–180 (DEFYVGPVPP…NIIHVELDTK (89 aa)) is the RRM domain. Disordered stretches follow at residues 234-304 (GCGS…QDPT), 353-710 (GSSG…PPPA), 955-1480 (VKRK…RTGP), 1519-1624 (QLPP…STKL), and 1658-1687 (RGPW…PQPL). Composition is skewed to polar residues over residues 242–258 (VTPN…TAYS), 264–273 (TPNSYGQGTP), 281–304 (PFSQ…QDPT), and 353–365 (GSSG…QSQD). A compositionally biased stretch (low complexity) spans 366-381 (ATTFAHTPPPAQTATA). 3 stretches are compositionally biased toward pro residues: residues 393–404 (TPAPPFPPPPEE), 423–433 (PAPPPLPPAEP), and 440–449 (GTPPGPPPPD). Basic and acidic residues predominate over residues 484–512 (EKPHDSLDSRIEMLLKEQRTKLPFLREQD). Low complexity predominate over residues 522–535 (SPISSSSSQLSPLS). Over residues 583 to 594 (PRPPPEPGPPDP) the composition is skewed to pro residues. The span at 628-637 (EDMEISDDEM) shows a compositional bias: acidic residues. The segment covering 650 to 669 (PMVVTPGAGAVAAPNVLAPN) has biased composition (low complexity). Residues 670-710 (LPLPPPPGFPPLPPPPPPPPPQPGFPMPPPLPPPPPPPPPA) show a composition bias toward pro residues. 2 positions are modified to phosphoserine: Ser977 and Ser985. The segment covering 986–1006 (ERERDRDIADAPCELTKRDPK) has biased composition (basic and acidic residues). A Phosphoserine modification is found at Ser1022. Over residues 1032-1055 (LSASSSSSASSSSGSSTTSPSSSA) the composition is skewed to low complexity. The segment covering 1058-1083 (KEEEDRESTEEEEEEEEEEAEEEEEE) has biased composition (acidic residues). The segment covering 1087 to 1097 (SRISSPSSSSS) has biased composition (low complexity). Residues 1100–1120 (KDDEDDNEADSDGQIDSDIDD) are compositionally biased toward acidic residues. The segment covering 1143 to 1178 (SITTSKAPAESSSSSSESSGSSEFESSSESESSSSS) has biased composition (low complexity). A compositionally biased stretch (acidic residues) spans 1179-1202 (SEDEEEMTVPGVEEEEEEEEEEEK). A compositionally biased stretch (low complexity) spans 1205–1217 (AMAAATVVAMAEE). The segment covering 1247–1261 (GTEEEVDIEAEDEVP) has biased composition (acidic residues). 3 positions are modified to phosphoserine: Ser1283, Ser1301, and Ser1354. Residues 1331–1373 (EPPPMLSLPLQPPLPPPRLLRPPSPPPEPETPEPPKPPVPLEP) are compositionally biased toward pro residues. A compositionally biased stretch (low complexity) spans 1402 to 1442 (PGGEPPLSGSSSGLSLSSPQVPGSPFSYPSPSPGLSSGGLP). The segment covering 1535–1544 (IKRKPGRPRR) has biased composition (basic residues). 2 stretches are compositionally biased toward pro residues: residues 1600–1619 (PAPP…PPPV) and 1678–1687 (SPEPSPPQPL). Phosphoserine occurs at positions 1678 and 1682. The short motif at 1764–1769 (GCARSE) is the WDR5 interaction motif (WIN) element. Positions 1786-1819 (SRASTDEPPMDTQGMSIPAQPHASTRAGSERRSE) are disordered. The short motif at 1817-1822 (RSEQRR) is the RxxxRR motif element. In terms of domain architecture, SET spans 1846–1963 (KKLKFCKSHI…VNEEITYDYK (118 aa)). Tyr1962 contributes to the S-adenosyl-L-methionine binding site. Residues 1969 to 1985 (VKIPCLCGSENCRGTLN) enclose the Post-SET domain.

It belongs to the class V-like SAM-binding methyltransferase superfamily. In terms of assembly, component of the SET1B/COMPASS complex composed of the catalytic subunit SETD1B, WDR5, WDR82, RBBP5, ASH2L/ASH2, CXXC1/CFP1, HCFC1, DPY30 homotrimer and BOD1. Forms a core complex with the evolutionary conserved subcomplex WRAD composed of WDR5, RBBP5, ASH2L/ASH2 and DPY30 subunits; WRAD differentially stimulates the methyltransferase activity. Interacts with HCFC1 and ASH2L/ASH2. Interacts (via the RRM domain) with WDR82. Interacts (via the RRM domain) with hyperphosphorylated C-terminal domain (CTD) of RNA polymerase II large subunit (POLR2A) only in the presence of WDR82. Binds specifically to CTD heptad repeats phosphorylated on 'Ser-5' of each heptad. Interacts with RBM15. Interacts (via WIN motif) with WDR5. In terms of tissue distribution, widely expressed.

The protein localises to the nucleus. It localises to the nucleus speckle. Its subcellular location is the chromosome. The protein resides in the cytoplasm. The catalysed reaction is L-lysyl(4)-[histone H3] + S-adenosyl-L-methionine = N(6)-methyl-L-lysyl(4)-[histone H3] + S-adenosyl-L-homocysteine + H(+). It carries out the reaction N(6)-methyl-L-lysyl(4)-[histone H3] + S-adenosyl-L-methionine = N(6),N(6)-dimethyl-L-lysyl(4)-[histone H3] + S-adenosyl-L-homocysteine + H(+). It catalyses the reaction N(6),N(6)-dimethyl-L-lysyl(4)-[histone H3] + S-adenosyl-L-methionine = N(6),N(6),N(6)-trimethyl-L-lysyl(4)-[histone H3] + S-adenosyl-L-homocysteine + H(+). Its function is as follows. Histone methyltransferase that catalyzes methyl group transfer from S-adenosyl-L-methionine to the epsilon-amino group of 'Lys-4' of histone H3 (H3K4) via a non-processive mechanism. Part of chromatin remodeling machinery, forms H3K4me1, H3K4me2 and H3K4me3 methylation marks at active chromatin sites where transcription and DNA repair take place. Plays an essential role in regulating the transcriptional programming of multipotent hematopoietic progenitor cells and lymphoid lineage specification during hematopoiesis. In Mus musculus (Mouse), this protein is Histone-lysine N-methyltransferase SETD1B (Setd1b).